A 432-amino-acid polypeptide reads, in one-letter code: Adenylosuccinate synthetase (432 aa).

Residues 12-18 and 40-42 each bind GTP; these read GDEGKGK and GHT. The active-site Proton acceptor is the Asp-13. Mg(2+) contacts are provided by Asp-13 and Gly-40. Residues 13-16, 38-41, Thr-128, Arg-142, Gln-223, Thr-238, and Arg-302 contribute to the IMP site; these read DEGK and NAGH. The active-site Proton donor is His-41. 298–304 serves as a coordination point for substrate; sequence TTTGRPR. GTP contacts are provided by residues Arg-304, 330-332, and 417-419; these read HLD and GVG.

This sequence belongs to the adenylosuccinate synthetase family. As to quaternary structure, homodimer. Mg(2+) is required as a cofactor.

It localises to the cytoplasm. The catalysed reaction is IMP + L-aspartate + GTP = N(6)-(1,2-dicarboxyethyl)-AMP + GDP + phosphate + 2 H(+). Its pathway is purine metabolism; AMP biosynthesis via de novo pathway; AMP from IMP: step 1/2. Plays an important role in the de novo pathway of purine nucleotide biosynthesis. Catalyzes the first committed step in the biosynthesis of AMP from IMP. In Symbiobacterium thermophilum (strain DSM 24528 / JCM 14929 / IAM 14863 / T), this protein is Adenylosuccinate synthetase.